Here is a 1031-residue protein sequence, read N- to C-terminus: Probable ATP-dependent RNA helicase DDX46 (1031 aa).

The span at methionine 1–serine 24 shows a compositional bias: basic residues. Residues methionine 1–leucine 228 are disordered. Glycine 2 carries N-myristoyl glycine lipidation. A compositionally biased stretch (basic and acidic residues) spans serine 26–arginine 49. Composition is skewed to basic residues over residues glutamate 50 to serine 73 and glutamate 81 to arginine 103. Basic and acidic residues predominate over residues lysine 112–leucine 200. The stretch at aspartate 152 to lysine 197 forms a coiled coil. Residue lysine 186 forms a Glycyl lysine isopeptide (Lys-Gly) (interchain with G-Cter in SUMO2) linkage. The residue at position 199 (serine 199) is a Phosphoserine. Acidic residues-rich tracts occupy residues glutamate 201 to alanine 211 and glutamate 219 to leucine 228. N6-acetyllysine is present on lysine 263. The residue at position 294 (tyrosine 294) is a Phosphotyrosine. Phosphoserine occurs at positions 295 and 296. Residue lysine 325 forms a Glycyl lysine isopeptide (Lys-Gly) (interchain with G-Cter in SUMO2) linkage. The residue at position 346 (serine 346) is a Phosphoserine. The short motif at lysine 372–threonine 400 is the Q motif element. The Helicase ATP-binding domain occupies isoleucine 403–valine 581. Alanine 416–threonine 423 provides a ligand contact to ATP. The DEAD box signature appears at aspartate 529–aspartate 532. The Helicase C-terminal domain occupies aspartate 592 to tryptophan 753. Lysine 776 carries the post-translational modification N6-acetyllysine. A Glycyl lysine isopeptide (Lys-Gly) (interchain with G-Cter in SUMO2) cross-link involves residue lysine 779. Serine 804 is subject to Phosphoserine. Lysine 903 bears the N6-acetyllysine mark. Glycyl lysine isopeptide (Lys-Gly) (interchain with G-Cter in SUMO2) cross-links involve residues lysine 907 and lysine 915. Position 928 is a phosphoserine (serine 928).

The protein belongs to the DEAD box helicase family. DDX46/PRP5 subfamily. Component of the 17S U2 SnRNP complex, a ribonucleoprotein complex that contains small nuclear RNA (snRNA) U2 and a number of specific proteins. Within the 17S U2 SnRNP complex, DDX46 is part of the SF3B subcomplex, which is required for 'A' complex assembly formed by the stable binding of U2 snRNP to the branchpoint sequence in pre-mRNA. Recruited to the 17S U2 SnRNP complex following release of DDX42; DDX42 and DDX46 bind the SF3B subcomplex in a competitive manner.

Its subcellular location is the nucleus speckle. It localises to the nucleus. The protein localises to the cajal body. It catalyses the reaction ATP + H2O = ADP + phosphate + H(+). Its function is as follows. Component of the 17S U2 SnRNP complex of the spliceosome, a large ribonucleoprotein complex that removes introns from transcribed pre-mRNAs. The 17S U2 SnRNP complex (1) directly participates in early spliceosome assembly and (2) mediates recognition of the intron branch site during pre-mRNA splicing by promoting the selection of the pre-mRNA branch-site adenosine, the nucleophile for the first step of splicing. Within the 17S U2 SnRNP complex, DDX46 plays essential roles during assembly of pre-spliceosome and proofreading of the branch site. This is Probable ATP-dependent RNA helicase DDX46 from Homo sapiens (Human).